A 325-amino-acid polypeptide reads, in one-letter code: Lipid droplet-associated hydrolase (325 aa).

Serine 139 serves as the catalytic Nucleophile. Active-site charge relay system residues include aspartate 271 and histidine 300.

The protein belongs to the AB hydrolase superfamily. LDAH family.

Its subcellular location is the lipid droplet. The protein localises to the endoplasmic reticulum. The catalysed reaction is a cholesterol ester + H2O = cholesterol + a fatty acid + H(+). In terms of biological role, probable serine lipid hydrolase associated with lipid droplets. Has low cholesterol esterase activity. Appears to lack triglyceride lipase activity. Involved in cholesterol and triglyceride homeostasis; stimulates cellular triglyceride accumulation and cellular cholesterol release. Acts antagonistically with PNPLA2/ATGL in regulation of cellular lipid stores. May regulate triglyceride accumulation indirectly through stimulation of PNPLA2/ATGL ubiquitination and proteasomal degradation. Promotes microtubule-dependent lipid droplet fusion. Highly expressed in macrophage-rich areas in atherosclerotic lesions, suggesting that it could promote cholesterol ester turnover in macrophages. The chain is Lipid droplet-associated hydrolase from Pongo abelii (Sumatran orangutan).